The chain runs to 201 residues: Pyrrolidone-carboxylate peptidase (201 aa).

Catalysis depends on residues Glu-81, Cys-143, and His-168.

The protein belongs to the peptidase C15 family. In terms of assembly, homotetramer.

It is found in the cytoplasm. It catalyses the reaction Release of an N-terminal pyroglutamyl group from a polypeptide, the second amino acid generally not being Pro.. Removes 5-oxoproline from various penultimate amino acid residues except L-proline. The polypeptide is Pyrrolidone-carboxylate peptidase (pcp) (Halalkalibacterium halodurans (strain ATCC BAA-125 / DSM 18197 / FERM 7344 / JCM 9153 / C-125) (Bacillus halodurans)).